A 45-amino-acid chain; its full sequence is KRKFLDAALRYYSISQIEKKAYLPDKSTVLDRAMIEHNNLLSASK.

It belongs to the CSN4 family. In terms of assembly, component of the CSN complex, probably composed of CSN1, CSN2, CSN3, CSN4, CSN5 (CSN5A or CSN5B), CSN6 (CSN6A or CSN6B), CSN7 and CSN8.

The protein localises to the cytoplasm. It localises to the nucleus. Functionally, component of the COP9 signalosome complex (CSN), a complex involved in various cellular and developmental processes such as photomorphogenesis and auxin and jasmonate responses. The CSN complex is an essential regulator of the ubiquitin (Ubl) conjugation pathway by mediating the deneddylation of the cullin subunits of SCF-type E3 ligase complexes, leading to decrease the Ubl ligase activity of SCF. It is involved in repression of photomorphogenesis in darkness by regulating the activity of COP1-containing Ubl ligase complexes. The polypeptide is COP9 signalosome complex subunit 4 (CSN4) (Brassica oleracea (Wild cabbage)).